A 456-amino-acid chain; its full sequence is MSNSAMSVVILAAGKGTRMYSDLPKVLHPLAGKPMVQHVIDAAMKLGAKNVHLVYGHGGDLLKNTLTDGALNWVLQAEQLGTGHAMQQAAPHFADDEDVLMLYGDVPLISVDTLQRLMAAKPQGGIGLLTVKLADPSGYGRIVRENDQVVGIVEHKDANEAQRQINEINTGILVANGRDLKRWLGMLNNDNAQGEFYITDIIALAHADGKKIEAVHPSRLSEVEGVNNRLQLSRLERIYQAEQSEKLLLAGVMLLDPARFDLRGELVHGRDISIDANVIIEGTVKLGDRVKIGAGCVLKNCVIGDDCEISPYSVLEDAVLAAECTVGPFARLRPGAELAVGAHVGNFVEMKKARLGKGSKAGHLSYLGDAEIGDDVNIGAGTITCNYDGANKHKTIIGDGVFVGSDTQLVAPVSVGKGSTIAAGTTVTRDIGEDELVLSRVKQVHIQGWQRPVKKK.

Positions 1–229 (MSNSAMSVVI…LSEVEGVNNR (229 aa)) are pyrophosphorylase. UDP-N-acetyl-alpha-D-glucosamine is bound by residues 11-14 (LAAG), lysine 25, glutamine 76, 81-82 (GT), 103-105 (YGD), glycine 140, glutamate 154, asparagine 169, and asparagine 227. Aspartate 105 is a binding site for Mg(2+). A Mg(2+)-binding site is contributed by asparagine 227. The linker stretch occupies residues 230 to 250 (LQLSRLERIYQAEQSEKLLLA). The segment at 251–456 (GVMLLDPARF…QGWQRPVKKK (206 aa)) is N-acetyltransferase. UDP-N-acetyl-alpha-D-glucosamine is bound by residues arginine 333 and lysine 351. Histidine 363 serves as the catalytic Proton acceptor. Residues tyrosine 366 and asparagine 377 each coordinate UDP-N-acetyl-alpha-D-glucosamine. Residues alanine 380, 386 to 387 (NY), serine 405, alanine 423, and arginine 440 each bind acetyl-CoA.

The protein in the N-terminal section; belongs to the N-acetylglucosamine-1-phosphate uridyltransferase family. This sequence in the C-terminal section; belongs to the transferase hexapeptide repeat family. In terms of assembly, homotrimer. The cofactor is Mg(2+).

It localises to the cytoplasm. It carries out the reaction alpha-D-glucosamine 1-phosphate + acetyl-CoA = N-acetyl-alpha-D-glucosamine 1-phosphate + CoA + H(+). It catalyses the reaction N-acetyl-alpha-D-glucosamine 1-phosphate + UTP + H(+) = UDP-N-acetyl-alpha-D-glucosamine + diphosphate. Its pathway is nucleotide-sugar biosynthesis; UDP-N-acetyl-alpha-D-glucosamine biosynthesis; N-acetyl-alpha-D-glucosamine 1-phosphate from alpha-D-glucosamine 6-phosphate (route II): step 2/2. The protein operates within nucleotide-sugar biosynthesis; UDP-N-acetyl-alpha-D-glucosamine biosynthesis; UDP-N-acetyl-alpha-D-glucosamine from N-acetyl-alpha-D-glucosamine 1-phosphate: step 1/1. It participates in bacterial outer membrane biogenesis; LPS lipid A biosynthesis. Functionally, catalyzes the last two sequential reactions in the de novo biosynthetic pathway for UDP-N-acetylglucosamine (UDP-GlcNAc). The C-terminal domain catalyzes the transfer of acetyl group from acetyl coenzyme A to glucosamine-1-phosphate (GlcN-1-P) to produce N-acetylglucosamine-1-phosphate (GlcNAc-1-P), which is converted into UDP-GlcNAc by the transfer of uridine 5-monophosphate (from uridine 5-triphosphate), a reaction catalyzed by the N-terminal domain. This Serratia proteamaculans (strain 568) protein is Bifunctional protein GlmU.